Here is a 514-residue protein sequence, read N- to C-terminus: MLLLLLLGSLTIVFYIWQRRTLSFWERHGVKYIRPFPVVGCTREFLTAKVPFFEQIQKFHEAPGFENEPFVGVYMTHRPALVIRDLELIKTVMIKKFQYFNNRVLQTDPHNDALGYKNLFFARSPGWRELRTKISPVFTSGKIKQMYPLMVKIGKNLQDSAERLGSGTEVQVKDLCSRFTTDLIATIAFGVEANALQDAKSEFFYHNRAIFSLTLSRGIDFAIIFMIPALASLARVKLFSRETTKFIRSSVNYVLKERERTGEKRNDLIDILLALKREAAANPGKMSKEVDLDYLVAQAAVFQTAGFETSASTMTMTLYELAKNEALQDRLRQEIVDFFGDEDHISYERIQEMPYLSQVVNETLRKYPIVGYIERECSQPAEGERFTLEPFHNMELPHGMSIYMSTVAVHRDPQYWPDPEKYDPERFNSSNRDNLNMDAYMPFGVGPRNCIGMRLGLLQSKLGLVHILRNHRFHTCDKTIKKIEWAPTSPVMASKRDIILRVEKVSGKKDFGQK.

A heme-binding site is contributed by cysteine 450.

The protein belongs to the cytochrome P450 family. Requires heme as cofactor.

It is found in the endoplasmic reticulum membrane. The protein localises to the microsome membrane. Functionally, may be involved in the metabolism of insect hormones and in the breakdown of synthetic insecticides. The protein is Probable cytochrome P450 6w1 (Cyp6w1) of Drosophila melanogaster (Fruit fly).